The chain runs to 425 residues: Serine/threonine transporter SstT (425 aa).

9 consecutive transmembrane segments (helical) span residues 11–31 (FLNG…LILA), 43–63 (FLGS…VFVL), 91–111 (LFAA…LVLV), 141–161 (ALVS…GFAL), 182–202 (IVHL…AGTI), 216–236 (LLAV…PIIV), 290–310 (IPLG…VLTL), 316–336 (LGIE…AVSA), and 363–383 (VAMQ…SAET).

This sequence belongs to the dicarboxylate/amino acid:cation symporter (DAACS) (TC 2.A.23) family.

It localises to the cell inner membrane. It catalyses the reaction L-serine(in) + Na(+)(in) = L-serine(out) + Na(+)(out). The catalysed reaction is L-threonine(in) + Na(+)(in) = L-threonine(out) + Na(+)(out). Involved in the import of serine and threonine into the cell, with the concomitant import of sodium (symport system). The sequence is that of Serine/threonine transporter SstT from Psychromonas ingrahamii (strain DSM 17664 / CCUG 51855 / 37).